The following is a 62-amino-acid chain: uncharacterized protein (62 aa).

This is an uncharacterized protein from Saccharomyces cerevisiae (strain ATCC 204508 / S288c) (Baker's yeast).